The following is a 221-amino-acid chain: Orotate phosphoribosyltransferase (221 aa).

Lys-26 is a 5-phospho-alpha-D-ribose 1-diphosphate binding site. 34-35 (FF) contributes to the orotate binding site. Residues 72-73 (YK), Arg-98, Lys-99, Lys-102, His-104, and 123-131 (DDVISAGTS) each bind 5-phospho-alpha-D-ribose 1-diphosphate. Orotate is bound by residues Ser-127 and Arg-155.

This sequence belongs to the purine/pyrimidine phosphoribosyltransferase family. PyrE subfamily. Homodimer. Requires Mg(2+) as cofactor.

The enzyme catalyses orotidine 5'-phosphate + diphosphate = orotate + 5-phospho-alpha-D-ribose 1-diphosphate. Its pathway is pyrimidine metabolism; UMP biosynthesis via de novo pathway; UMP from orotate: step 1/2. Its function is as follows. Catalyzes the transfer of a ribosyl phosphate group from 5-phosphoribose 1-diphosphate to orotate, leading to the formation of orotidine monophosphate (OMP). This Janthinobacterium sp. (strain Marseille) (Minibacterium massiliensis) protein is Orotate phosphoribosyltransferase.